A 354-amino-acid polypeptide reads, in one-letter code: Serum paraoxonase/arylesterase 2 (354 aa).

Cys-42 and Cys-352 form a disulfide bridge. Positions 53 and 54 each coordinate Ca(2+). His-114 acts as the Proton acceptor in catalysis. 4 residues coordinate Ca(2+): Ile-116, Asn-167, Asp-168, and Asn-223. Asn-254 is a glycosylation site (N-linked (GlcNAc...) asparagine). Residues Asp-268 and Asn-269 each contribute to the Ca(2+) site. N-linked (GlcNAc...) asparagine glycosylation is found at Asn-269 and Asn-323.

It belongs to the paraoxonase family. Homotrimer. Ca(2+) is required as a cofactor. The signal sequence is not cleaved. Widely expressed with highest expression in liver, lung, placenta, testis and heart.

It is found in the membrane. It catalyses the reaction a phenyl acetate + H2O = a phenol + acetate + H(+). The enzyme catalyses an N-acyl-L-homoserine lactone + H2O = an N-acyl-L-homoserine + H(+). Capable of hydrolyzing lactones and a number of aromatic carboxylic acid esters. Has antioxidant activity. Is not associated with high density lipoprotein. Prevents LDL lipid peroxidation, reverses the oxidation of mildly oxidized LDL, and inhibits the ability of MM-LDL to induce monocyte chemotaxis. The sequence is that of Serum paraoxonase/arylesterase 2 (PON2) from Homo sapiens (Human).